The chain runs to 309 residues: Homoserine kinase (309 aa).

Position 91 to 101 (91 to 101) interacts with ATP; it reads PIGSGLGSSAC.

Belongs to the GHMP kinase family. Homoserine kinase subfamily.

The protein localises to the cytoplasm. The catalysed reaction is L-homoserine + ATP = O-phospho-L-homoserine + ADP + H(+). The protein operates within amino-acid biosynthesis; L-threonine biosynthesis; L-threonine from L-aspartate: step 4/5. Catalyzes the ATP-dependent phosphorylation of L-homoserine to L-homoserine phosphate. The sequence is that of Homoserine kinase from Cronobacter sakazakii (strain ATCC BAA-894) (Enterobacter sakazakii).